A 347-amino-acid polypeptide reads, in one-letter code: Tsukushi (347 aa).

Positions 1–19 (MASLLCLFFSLLGLAAIGA) are cleaved as a signal peptide. The LRRNT domain occupies 20–61 (VKNCHPQCRCEVETFGLFDSFSLTKVDCSRIGPGNTPVPIPL). LRR repeat units lie at residues 62–83 (DTSH…MLSG), 88–109 (TLVS…AFSK), 112–133 (YLET…CFTG), 135–156 (PLVE…LFTT), 160–175 (DLPI…LTSI), 185–205 (YIKS…LNGI), 206–227 (PLQY…AFDS), 230–252 (ELVH…AFRS), 255–277 (NLQA…VFSG), and 280–301 (SLQE…VFMQ). N-linked (GlcNAc...) asparagine glycosylation is present at N285.

Forms a ternary complex with chordin/CHRD and BMP4.

It localises to the secreted. In terms of biological role, contributes to various developmental events through its interactions with multiple signaling pathways. Dorsalizing factor which functions as an inhibitor of bone morphogenetic proteins during gastrulation. The sequence is that of Tsukushi (tsku) from Danio rerio (Zebrafish).